A 264-amino-acid polypeptide reads, in one-letter code: Rhodanese-like domain-containing protein 4A, chloroplastic (264 aa).

The transit peptide at 1 to 60 directs the protein to the chloroplast; the sequence is MTSLPIILASSPLRNLTKPCSTSQIPKPIQNSTKQPPIHLLTKTNLSVTISQLIITSPVL. A helical transmembrane segment spans residues 95–115; sequence FFVAGCTFTYLVVYPAVMFYL. One can recognise a Rhodanese domain in the interval 132-232; sequence NESDSQLLDI…ARGKNGWLAI (101 aa).

Its subcellular location is the plastid. It is found in the chloroplast. It localises to the membrane. The polypeptide is Rhodanese-like domain-containing protein 4A, chloroplastic (STR4A) (Arabidopsis thaliana (Mouse-ear cress)).